A 557-amino-acid polypeptide reads, in one-letter code: Warthog protein 4 (557 aa).

Positions 1 to 20 are cleaved as a signal peptide; sequence MRFSLLALVLLSSSYKFTYG. The interval 272 to 308 is disordered; the sequence is QETNPQPPPPPGQQGGFVQPQGFQPQGGFQPQGFQPQ. The span at 287–308 shows a compositional bias: low complexity; that stretch reads GFVQPQGFQPQGGFQPQGFQPQ.

It belongs to the hedgehog family. In terms of processing, the C-terminal domain displays an autoproteolysis activity.

It is found in the secreted. Its subcellular location is the cell surface. The protein localises to the cell membrane. The protein resides in the extracellular space. Intercellular signal essential for a variety of patterning events during development. In Caenorhabditis elegans, this protein is Warthog protein 4 (wrt-4).